The sequence spans 413 residues: Phosphopentomutase (413 aa).

6 residues coordinate Mn(2+): aspartate 11, aspartate 306, histidine 311, aspartate 347, histidine 348, and histidine 359.

This sequence belongs to the phosphopentomutase family. Mn(2+) serves as cofactor.

Its subcellular location is the cytoplasm. The catalysed reaction is 2-deoxy-alpha-D-ribose 1-phosphate = 2-deoxy-D-ribose 5-phosphate. The enzyme catalyses alpha-D-ribose 1-phosphate = D-ribose 5-phosphate. The protein operates within carbohydrate degradation; 2-deoxy-D-ribose 1-phosphate degradation; D-glyceraldehyde 3-phosphate and acetaldehyde from 2-deoxy-alpha-D-ribose 1-phosphate: step 1/2. Its function is as follows. Isomerase that catalyzes the conversion of deoxy-ribose 1-phosphate (dRib-1-P) and ribose 1-phosphate (Rib-1-P) to deoxy-ribose 5-phosphate (dRib-5-P) and ribose 5-phosphate (Rib-5-P), respectively. The chain is Phosphopentomutase from Helicobacter pylori (strain ATCC 700392 / 26695) (Campylobacter pylori).